The chain runs to 77 residues: Large ribosomal subunit protein uL29 (77 aa).

This sequence belongs to the universal ribosomal protein uL29 family.

The protein is Large ribosomal subunit protein uL29 of Mycobacterium avium (strain 104).